The sequence spans 75 residues: Metallothionein-like protein 1 (75 aa).

This sequence belongs to the metallothionein superfamily. Type 15 family.

In terms of biological role, metallothioneins have a high content of cysteine residues that bind various heavy metals. The polypeptide is Metallothionein-like protein 1 (Cicer arietinum (Chickpea)).